Here is a 210-residue protein sequence, read N- to C-terminus: uncharacterized protein (210 aa).

A Fe2OG dioxygenase domain is found at 90-193 (KPDQIIVNEY…RISITFRNVI (104 aa)).

This is an uncharacterized protein from Acanthamoeba polyphaga (Amoeba).